The following is a 142-amino-acid chain: Holo-[acyl-carrier-protein] synthase (142 aa).

Mg(2+)-binding residues include D8 and E57.

This sequence belongs to the P-Pant transferase superfamily. AcpS family. Mg(2+) is required as a cofactor.

Its subcellular location is the cytoplasm. The catalysed reaction is apo-[ACP] + CoA = holo-[ACP] + adenosine 3',5'-bisphosphate + H(+). Its function is as follows. Transfers the 4'-phosphopantetheine moiety from coenzyme A to a Ser of acyl-carrier-protein. The protein is Holo-[acyl-carrier-protein] synthase of Maricaulis maris (strain MCS10) (Caulobacter maris).